The chain runs to 486 residues: Aspartyl/glutamyl-tRNA(Asn/Gln) amidotransferase subunit B (486 aa).

It belongs to the GatB/GatE family. GatB subfamily. Heterotrimer of A, B and C subunits.

It catalyses the reaction L-glutamyl-tRNA(Gln) + L-glutamine + ATP + H2O = L-glutaminyl-tRNA(Gln) + L-glutamate + ADP + phosphate + H(+). The catalysed reaction is L-aspartyl-tRNA(Asn) + L-glutamine + ATP + H2O = L-asparaginyl-tRNA(Asn) + L-glutamate + ADP + phosphate + 2 H(+). Its function is as follows. Allows the formation of correctly charged Asn-tRNA(Asn) or Gln-tRNA(Gln) through the transamidation of misacylated Asp-tRNA(Asn) or Glu-tRNA(Gln) in organisms which lack either or both of asparaginyl-tRNA or glutaminyl-tRNA synthetases. The reaction takes place in the presence of glutamine and ATP through an activated phospho-Asp-tRNA(Asn) or phospho-Glu-tRNA(Gln). This Leptospira borgpetersenii serovar Hardjo-bovis (strain JB197) protein is Aspartyl/glutamyl-tRNA(Asn/Gln) amidotransferase subunit B.